Here is a 154-residue protein sequence, read N- to C-terminus: Lipoprotein signal peptidase (154 aa).

Transmembrane regions (helical) follow at residues 7–27, 58–78, and 88–108; these read VLYL…KNYI, IFSG…AVVV, and NWLF…NFID. Active-site residues include D117 and D133. The helical transmembrane segment at 128 to 148 threads the bilayer; that stretch reads IFNIADSAITVGIVLVFIYLI.

The protein belongs to the peptidase A8 family.

It is found in the cell membrane. It carries out the reaction Release of signal peptides from bacterial membrane prolipoproteins. Hydrolyzes -Xaa-Yaa-Zaa-|-(S,diacylglyceryl)Cys-, in which Xaa is hydrophobic (preferably Leu), and Yaa (Ala or Ser) and Zaa (Gly or Ala) have small, neutral side chains.. The protein operates within protein modification; lipoprotein biosynthesis (signal peptide cleavage). Its function is as follows. This protein specifically catalyzes the removal of signal peptides from prolipoproteins. The chain is Lipoprotein signal peptidase from Lactobacillus gasseri (strain ATCC 33323 / DSM 20243 / BCRC 14619 / CIP 102991 / JCM 1131 / KCTC 3163 / NCIMB 11718 / NCTC 13722 / AM63).